The primary structure comprises 247 residues: Isoprenyl transferase (247 aa).

The active site involves Asp18. Asp18 is a binding site for Mg(2+). Residues 19–22 (GNGR), Trp23, Arg31, His35, and 63–65 (SSE) contribute to the substrate site. Catalysis depends on Asn66, which acts as the Proton acceptor. Residues Trp67, Arg69, Arg186, and 192-194 (RLS) contribute to the substrate site. Residue Glu205 participates in Mg(2+) binding.

It belongs to the UPP synthase family. Homodimer. Mg(2+) serves as cofactor.

In terms of biological role, catalyzes the condensation of isopentenyl diphosphate (IPP) with allylic pyrophosphates generating different type of terpenoids. The chain is Isoprenyl transferase from Rhizobium meliloti (strain 1021) (Ensifer meliloti).